Reading from the N-terminus, the 156-residue chain is ATP synthase subunit b (156 aa).

Residues 12 to 32 (VAFFIFVLFCMKFVWPPVIAA) form a helical membrane-spanning segment.

The protein belongs to the ATPase B chain family. F-type ATPases have 2 components, F(1) - the catalytic core - and F(0) - the membrane proton channel. F(1) has five subunits: alpha(3), beta(3), gamma(1), delta(1), epsilon(1). F(0) has three main subunits: a(1), b(2) and c(10-14). The alpha and beta chains form an alternating ring which encloses part of the gamma chain. F(1) is attached to F(0) by a central stalk formed by the gamma and epsilon chains, while a peripheral stalk is formed by the delta and b chains.

Its subcellular location is the cell inner membrane. Functionally, f(1)F(0) ATP synthase produces ATP from ADP in the presence of a proton or sodium gradient. F-type ATPases consist of two structural domains, F(1) containing the extramembraneous catalytic core and F(0) containing the membrane proton channel, linked together by a central stalk and a peripheral stalk. During catalysis, ATP synthesis in the catalytic domain of F(1) is coupled via a rotary mechanism of the central stalk subunits to proton translocation. Component of the F(0) channel, it forms part of the peripheral stalk, linking F(1) to F(0). This is ATP synthase subunit b from Pseudomonas syringae pv. syringae (strain B728a).